A 225-amino-acid chain; its full sequence is Octanoyltransferase (225 aa).

The 181-residue stretch at 37–217 (SDTPDEFWVV…ELASLIGYQT (181 aa)) folds into the BPL/LPL catalytic domain. Substrate is bound by residues 76–83 (RGGQVTYH), 148–150 (SLG), and 161–163 (GLA). Residue cysteine 179 is the Acyl-thioester intermediate of the active site.

It belongs to the LipB family.

It is found in the cytoplasm. The catalysed reaction is octanoyl-[ACP] + L-lysyl-[protein] = N(6)-octanoyl-L-lysyl-[protein] + holo-[ACP] + H(+). It participates in protein modification; protein lipoylation via endogenous pathway; protein N(6)-(lipoyl)lysine from octanoyl-[acyl-carrier-protein]: step 1/2. Functionally, catalyzes the transfer of endogenously produced octanoic acid from octanoyl-acyl-carrier-protein onto the lipoyl domains of lipoate-dependent enzymes. Lipoyl-ACP can also act as a substrate although octanoyl-ACP is likely to be the physiological substrate. The chain is Octanoyltransferase from Aeromonas salmonicida (strain A449).